The sequence spans 93 residues: Small ribosomal subunit protein uS15 (93 aa).

Belongs to the universal ribosomal protein uS15 family. As to quaternary structure, part of the 30S ribosomal subunit. Forms a bridge to the 50S subunit in the 70S ribosome, contacting the 23S rRNA.

In terms of biological role, one of the primary rRNA binding proteins, it binds directly to 16S rRNA where it helps nucleate assembly of the platform of the 30S subunit by binding and bridging several RNA helices of the 16S rRNA. Its function is as follows. Forms an intersubunit bridge (bridge B4) with the 23S rRNA of the 50S subunit in the ribosome. The protein is Small ribosomal subunit protein uS15 of Anaplasma marginale (strain St. Maries).